The primary structure comprises 310 residues: Homeobox protein Hox-A13a (310 aa).

Positions 244-303 (GRKKRVPYTKVQLKELEREYATNKFITKDKRRRISAQTNLSERQVTIWFQNRRVKEKKVV) form a DNA-binding region, homeobox.

It belongs to the Abd-B homeobox family.

It is found in the nucleus. Functionally, sequence-specific transcription factor which is part of a developmental regulatory system that provides cells with specific positional identities on the anterior-posterior axis. This chain is Homeobox protein Hox-A13a (hoxa13a), found in Danio rerio (Zebrafish).